A 101-amino-acid chain; its full sequence is Small ribosomal subunit protein uS14 (101 aa).

It belongs to the universal ribosomal protein uS14 family. As to quaternary structure, part of the 30S ribosomal subunit. Contacts proteins S3 and S10.

In terms of biological role, binds 16S rRNA, required for the assembly of 30S particles and may also be responsible for determining the conformation of the 16S rRNA at the A site. The chain is Small ribosomal subunit protein uS14 from Orientia tsutsugamushi (strain Ikeda) (Rickettsia tsutsugamushi).